Reading from the N-terminus, the 2335-residue chain is Serine/threonine-protein kinase tor1 (2335 aa).

HEAT repeat units lie at residues 1–31 (MEYF…SSTK), 164–201 (LYIS…VVCQ), 331–371 (PYLQ…AVKL), 410–449 (PIQE…AREP), 474–512 (YSLI…RDPI), 522–560 (ESVA…RHLA), 562–596 (PDNI…YNPA), 642–679 (PYIQ…VEGE), 684–722 (DVRG…RSGY), 728–766 (LDYP…LDPY), 843–880 (VFLP…IIGP), 904–923 (LLVI…DEFK), 924–961 (FYLP…FGSN), 964–1003 (EYMH…SVNF), and 1005–1042 (DHAS…QLGY). The region spanning 1226–1781 (VISAHASKCN…VYSLTVSSKS (556 aa)) is the FAT domain. A PI3K/PI4K catalytic domain is found at 1955-2269 (FHHTFEVISS…ARHADYAALS (315 aa)). The interval 1961 to 1967 (VISSKQR) is G-loop. T1972 bears the Phosphothreonine; by PKB/AKT1 mark. Residues 2134-2142 (GLGDRHPSN) form a catalytic loop region. Residues 2154–2179 (HIDFGDCFEVAMHREKFPEKIPFRLT) form an activation loop region. Residues 2303 to 2335 (EQLPVKAQVEKLIQQATAPENLCRCYVGWCSFW) form the FATC domain.

Belongs to the PI3/PI4-kinase family. As to quaternary structure, the target of rapamycin complex 2 (TORC2) is composed of at least bit61, pop3/wat1, sin1, ste20 and tor1. Phosphorylation at Thr-1972 in the ATP-binding region by AKT1 strongly reduces kinase activity.

It is found in the cytoplasm. It catalyses the reaction L-seryl-[protein] + ATP = O-phospho-L-seryl-[protein] + ADP + H(+). The enzyme catalyses L-threonyl-[protein] + ATP = O-phospho-L-threonyl-[protein] + ADP + H(+). In terms of biological role, catalytic component of TORC2, which regulates multiple cellular processes to control cell growth in response to environmental signals. In response to signals, TORC2 phosphorylates AGC protein kinase family members. TORC2 is required for cell survival under various stress conditions. TORC2 positively controls G1 cell-cycle arrest, sexual development and amino acid uptake. Positively regulates amino acid uptake through the control of expression of amino acid permeases. Responsible for the phosphorylation of AGC kinase gad8 at 'Ser-527' and 'Ser-546', activating gad8 kinase activity and promoting sexual development. This Schizosaccharomyces pombe (strain 972 / ATCC 24843) (Fission yeast) protein is Serine/threonine-protein kinase tor1.